A 426-amino-acid polypeptide reads, in one-letter code: 3-phosphoshikimate 1-carboxyvinyltransferase (426 aa).

3 residues coordinate 3-phosphoshikimate: lysine 22, serine 23, and arginine 27. Phosphoenolpyruvate is bound at residue lysine 22. Phosphoenolpyruvate is bound by residues glycine 96 and arginine 124. Residues serine 170, serine 171, glutamine 172, serine 198, aspartate 314, asparagine 337, and lysine 341 each contribute to the 3-phosphoshikimate site. Residue glutamine 172 participates in phosphoenolpyruvate binding. Aspartate 314 serves as the catalytic Proton acceptor. Positions 345, 387, and 412 each coordinate phosphoenolpyruvate.

Belongs to the EPSP synthase family. As to quaternary structure, monomer.

It localises to the cytoplasm. It carries out the reaction 3-phosphoshikimate + phosphoenolpyruvate = 5-O-(1-carboxyvinyl)-3-phosphoshikimate + phosphate. It participates in metabolic intermediate biosynthesis; chorismate biosynthesis; chorismate from D-erythrose 4-phosphate and phosphoenolpyruvate: step 6/7. Catalyzes the transfer of the enolpyruvyl moiety of phosphoenolpyruvate (PEP) to the 5-hydroxyl of shikimate-3-phosphate (S3P) to produce enolpyruvyl shikimate-3-phosphate and inorganic phosphate. This chain is 3-phosphoshikimate 1-carboxyvinyltransferase, found in Shewanella halifaxensis (strain HAW-EB4).